The sequence spans 77 residues: Cell division topological specificity factor (77 aa).

This sequence belongs to the MinE family.

Prevents the cell division inhibition by proteins MinC and MinD at internal division sites while permitting inhibition at polar sites. This ensures cell division at the proper site by restricting the formation of a division septum at the midpoint of the long axis of the cell. In Helicobacter acinonychis (strain Sheeba), this protein is Cell division topological specificity factor.